The chain runs to 180 residues: MTNRLKEKYTNEVVPALTEQFNYTSIMAVPKVDKIVINMGVGDAVNNSKNLDKAVAELALISGQKPLITKAKKSVAAFRLREGMPIGAKVTLRGERMFEFLDKLVTVSLPRVRDFHGVSNKAFDGRGNYTLGVKEQLIFPEINYDDVDKVRGMDIVIVTTANTDEESRELLAKLGMPFAK.

This sequence belongs to the universal ribosomal protein uL5 family. Part of the 50S ribosomal subunit; part of the 5S rRNA/L5/L18/L25 subcomplex. Contacts the 5S rRNA and the P site tRNA. Forms a bridge to the 30S subunit in the 70S ribosome.

Functionally, this is one of the proteins that bind and probably mediate the attachment of the 5S RNA into the large ribosomal subunit, where it forms part of the central protuberance. In the 70S ribosome it contacts protein S13 of the 30S subunit (bridge B1b), connecting the 2 subunits; this bridge is implicated in subunit movement. Contacts the P site tRNA; the 5S rRNA and some of its associated proteins might help stabilize positioning of ribosome-bound tRNAs. The sequence is that of Large ribosomal subunit protein uL5 from Lactococcus lactis subsp. lactis (strain IL1403) (Streptococcus lactis).